The primary structure comprises 297 residues: uncharacterized protein (297 aa).

7 helical membrane-spanning segments follow: residues 14–34 (LFLMFIGTVSFLFIFIPFLKF), 55–75 (LLLGPIYGFFAVMLVTLIYFF), 81–101 (FYFGIYSLIPPTLAVISAGAL), 110–130 (AIILIVGLLLFYLTDVGRVAF), 135–155 (LSTLALLLILIFREKISKLLF), 163–183 (IVGATILSFSSVMTDHLYGSI), and 208–228 (LIMTVIGAFFVIFAIEISKCF).

Its subcellular location is the cell membrane. This is an uncharacterized protein from Methanocaldococcus jannaschii (strain ATCC 43067 / DSM 2661 / JAL-1 / JCM 10045 / NBRC 100440) (Methanococcus jannaschii).